The following is a 366-amino-acid chain: tRNA(Met) cytidine acetate ligase (366 aa).

ATP-binding positions include 7–20 (IAEF…HQYL), Gly-96, Asn-152, and Arg-175.

It belongs to the TmcAL family.

Its subcellular location is the cytoplasm. The catalysed reaction is cytidine(34) in elongator tRNA(Met) + acetate + ATP = N(4)-acetylcytidine(34) in elongator tRNA(Met) + AMP + diphosphate. Catalyzes the formation of N(4)-acetylcytidine (ac(4)C) at the wobble position of elongator tRNA(Met), using acetate and ATP as substrates. First activates an acetate ion to form acetyladenylate (Ac-AMP) and then transfers the acetyl group to tRNA to form ac(4)C34. The polypeptide is tRNA(Met) cytidine acetate ligase (Streptococcus equi subsp. zooepidemicus (strain H70)).